Reading from the N-terminus, the 443-residue chain is MENVDTLILGGTVLCLDETMTRIEDGALAIAGDAIAAVGTEREFRQRFTSRNIVDGKHSLILPGLVNSHTHAAMTCFRGIADDMALMDWLGNYIFPAEARNVDPELVYWGSLLACAEMIKSGTTTFCDMYIFEEETARAAREAGMRCLLGEVLFDFPSPNVKTPQEGLAYTRKLLYRWSGDPLVRIAVEPHALYTCSRSLLLEAGNLATEYQVPLALHLLENSSEKKQLQEKLGQDALSCLRELGLLNERLIAFHCVCLDDEDIETFRDEGCKAVYNPESNMKLASGFAPVSRMLREGICVGLGTDGCASNNNLDLFQEMDTAAKLEKVRHLDPTLMPAETVVRMATCQGARVLGMDGITGCLKAGMKADFILIDLNRPHLTPMYNPYSHLVYTVNGSDVKTVFINGKMVMKDRQLLTFNEEECMQQVRRIAERVRESLKEPV.

Zn(2+) contacts are provided by His69 and His71. Residues Glu98 and His191 each coordinate substrate. Zn(2+) is bound at residue His218. Glu221 and Asp306 together coordinate substrate. Asp306 provides a ligand contact to Zn(2+).

The protein belongs to the metallo-dependent hydrolases superfamily. MTA/SAH deaminase family. The cofactor is Zn(2+).

The enzyme catalyses S-adenosyl-L-homocysteine + H2O + H(+) = S-inosyl-L-homocysteine + NH4(+). It catalyses the reaction S-methyl-5'-thioadenosine + H2O + H(+) = S-methyl-5'-thioinosine + NH4(+). Its function is as follows. Catalyzes the deamination of 5-methylthioadenosine and S-adenosyl-L-homocysteine into 5-methylthioinosine and S-inosyl-L-homocysteine, respectively. Is also able to deaminate adenosine. This is 5-methylthioadenosine/S-adenosylhomocysteine deaminase 1 from Syntrophus aciditrophicus (strain SB).